A 389-amino-acid chain; its full sequence is Sinapine esterase (389 aa).

The N-terminal stretch at 1–25 (MASSLKKLITSFLLFFFYTIIVASS) is a signal peptide. S41 serves as the catalytic Nucleophile. N104, N137, and N320 each carry an N-linked (GlcNAc...) asparagine glycan. Catalysis depends on residues D345 and H348. Residues N372 and N383 are each glycosylated (N-linked (GlcNAc...) asparagine).

The protein belongs to the 'GDSL' lipolytic enzyme family. As to expression, expressed in most tissues or organs of the mature seedlings. Not expressed in roots of mature seedlings.

It is found in the secreted. The enzyme catalyses O-sinapoylcholine + H2O = (E)-sinapate + choline + H(+). Its activity is regulated as follows. Inhibited by PMSF. In terms of biological role, sinapine esterase that catalyzes that hydrolysis of sinapine, releasing choline and sinapate. Sinapine (O-sinapoylcholine) is the predominant phenolic compound in a complex group of sinapate esters in seeds of oilseed rape (B.napus). Sinapine has antinutritive activity and prevents the use of seed protein for food and feed. Shows broad substrate specificity towards various other choline esters, including phosphatidylcholine. The protein is Sinapine esterase of Brassica napus (Rape).